Consider the following 97-residue polypeptide: Cell division protein FtsL (97 aa).

The Cytoplasmic portion of the chain corresponds to 1 to 11 (MSRLFVKRLPT). Residues 12–32 (GSFLMLLLYIGLLLSAIAVAY) form a helical membrane-spanning segment. Residues 33–97 (STYWNRQLLN…DPAEVRMVAP (65 aa)) lie on the Periplasmic side of the membrane.

It belongs to the FtsL family. Part of a complex composed of FtsB, FtsL and FtsQ.

Its subcellular location is the cell inner membrane. Essential cell division protein. May link together the upstream cell division proteins, which are predominantly cytoplasmic, with the downstream cell division proteins, which are predominantly periplasmic. The polypeptide is Cell division protein FtsL (Pseudomonas aeruginosa (strain ATCC 15692 / DSM 22644 / CIP 104116 / JCM 14847 / LMG 12228 / 1C / PRS 101 / PAO1)).